The following is a 401-amino-acid chain: Phosphoglycerate kinase, cytosolic (401 aa).

Ala-24, Asp-25, Asn-27, Arg-41, Ser-63, His-64, Gly-66, Arg-67, Arg-122, His-154, and Arg-155 together coordinate (2R)-3-phosphoglycerate. An ADP-binding site is contributed by Gly-200. CDP is bound at residue Gly-200. Lys-202 and Lys-206 together coordinate AMP. Lys-206 serves as a coordination point for ATP. ADP is bound at residue Gly-224. Gly-224 serves as a coordination point for CDP. AMP-binding residues include Gly-225 and Gly-297. ATP is bound by residues Gly-225 and Gly-297. The CDP site is built by Gly-322 and Phe-327. Residue Phe-327 participates in ADP binding. Glu-328 provides a ligand contact to AMP. Residues Glu-328, Asp-359, and Ser-360 each coordinate ATP. Asp-359 serves as a coordination point for Mg(2+).

The protein belongs to the phosphoglycerate kinase family. As to quaternary structure, monomer. It depends on Mg(2+) as a cofactor.

The protein localises to the cytoplasm. It carries out the reaction (2R)-3-phosphoglycerate + ATP = (2R)-3-phospho-glyceroyl phosphate + ADP. It functions in the pathway carbohydrate degradation; glycolysis; pyruvate from D-glyceraldehyde 3-phosphate: step 2/5. The protein is Phosphoglycerate kinase, cytosolic of Triticum aestivum (Wheat).